Consider the following 539-residue polypeptide: Chaperonin GroEL (539 aa).

ATP is bound by residues 29–32 (TIGP), 86–90 (DGTTT), G413, 476–478 (NAA), and D492.

It belongs to the chaperonin (HSP60) family. As to quaternary structure, forms a cylinder of 14 subunits composed of two heptameric rings stacked back-to-back. Interacts with the co-chaperonin GroES.

It is found in the cytoplasm. The enzyme catalyses ATP + H2O + a folded polypeptide = ADP + phosphate + an unfolded polypeptide.. Together with its co-chaperonin GroES, plays an essential role in assisting protein folding. The GroEL-GroES system forms a nano-cage that allows encapsulation of the non-native substrate proteins and provides a physical environment optimized to promote and accelerate protein folding. The sequence is that of Chaperonin GroEL from Staphylococcus epidermidis.